A 362-amino-acid polypeptide reads, in one-letter code: Chorismate synthase (362 aa).

NADP(+) is bound by residues Arg-48 and Arg-54. Residues 125–127 (RSS), 237–238 (NA), Gly-277, 292–296 (KPTSS), and Arg-318 contribute to the FMN site.

This sequence belongs to the chorismate synthase family. Homotetramer. Requires FMNH2 as cofactor.

It catalyses the reaction 5-O-(1-carboxyvinyl)-3-phosphoshikimate = chorismate + phosphate. It functions in the pathway metabolic intermediate biosynthesis; chorismate biosynthesis; chorismate from D-erythrose 4-phosphate and phosphoenolpyruvate: step 7/7. Its function is as follows. Catalyzes the anti-1,4-elimination of the C-3 phosphate and the C-6 proR hydrogen from 5-enolpyruvylshikimate-3-phosphate (EPSP) to yield chorismate, which is the branch point compound that serves as the starting substrate for the three terminal pathways of aromatic amino acid biosynthesis. This reaction introduces a second double bond into the aromatic ring system. The chain is Chorismate synthase from Idiomarina loihiensis (strain ATCC BAA-735 / DSM 15497 / L2-TR).